Here is a 392-residue protein sequence, read N- to C-terminus: Putative cystathionine gamma-lyase 2 (392 aa).

The segment at 32-55 (LSSTYKQDNPGEPKGHDYSRAGNP) is disordered. Over residues 40–50 (NPGEPKGHDYS) the composition is skewed to basic and acidic residues. Substrate-binding residues include Arg51, Tyr103, and Arg108. Lys203 bears the N6-(pyridoxal phosphate)lysine mark. Position 330 (Glu330) interacts with substrate.

Belongs to the trans-sulfuration enzymes family. Pyridoxal 5'-phosphate serves as cofactor.

The protein resides in the cytoplasm. It catalyses the reaction L,L-cystathionine + H2O = 2-oxobutanoate + L-cysteine + NH4(+). The protein operates within amino-acid biosynthesis; L-cysteine biosynthesis; L-cysteine from L-homocysteine and L-serine: step 2/2. In Caenorhabditis elegans, this protein is Putative cystathionine gamma-lyase 2 (cth-2).